Consider the following 3122-residue polypeptide: tRNA nuclease CdiA-2 (3122 aa).

A two-partner system transport domain (TPS) region spans residues 36–205 (RAGVVPAWLS…ATLTTGNPNF (170 aa)). A helical membrane pass occupies residues 54–74 (VALAVLVAAGVVPIWVNAQVV). Residues 256-1254 (VVAGSNQVDY…GGSVAIQASG (999 aa)) form an FHA-1 region. The segment at 492-512 (GMTLGGGSLSNQGGRANSQGP) is disordered. The span at 500-512 (LSNQGGRANSQGP) shows a compositional bias: polar residues. The receptor binding domain (RBD) stretch occupies residues 1345–1635 (TRRVMQTSGN…SATAVNVLSN (291 aa)). The interval 1790–1845 (TAGNIDLKNTQVFTNSGTVKADTTLALQGKQIDNAFGALQSGGLTSLDTTGNVDLT) is periplasmic FHA-1 repeat (pFR). The tract at residues 1947–2085 (SDTDLNSATG…TERHVYNSRE (139 aa)) is FHA-2. 3 disordered regions span residues 2002–2031 (TSTI…ALTG), 2151–2174 (TTSQ…MSGG), and 2325–2352 (IGVQ…GSSI). Positions 2086–2825 (THSRSGVVSG…SAGAAMASNV (740 aa)) are pretoxin (PT) domain. Composition is skewed to low complexity over residues 2151–2170 (TTSQ…HSGL) and 2325–2341 (IGVQ…MQSS). The span at 2342-2352 (EDQTIQRGSSI) shows a compositional bias: polar residues. The segment at 2821–3122 (MASNVELYNA…NITIIKPKGN (302 aa)) is C-terminal effector domain (CT), has tRNA nuclease activity. The ELYN C-terminal motif signature appears at 2826–2829 (ELYN). Positions 2948–3000 (GATDRTPPSNAILSNSNSDNNSTQGSQSGTVTKTPNPEATGSLSGKPTQIPPL) are disordered. Residues 2948–3122 (GATDRTPPSN…NITIIKPKGN (175 aa)) form a truncated CT domain, has tRNA nuclease activity, sufficient for interaction with CdiI-2 region. Positions 2953-2994 (TPPSNAILSNSNSDNNSTQGSQSGTVTKTPNPEATGSLSGKP) are enriched in polar residues. The tract at residues 2987 to 3122 (TGSLSGKPTQ…NITIIKPKGN (136 aa)) is has tRNase activity. Active-site residues include glutamate 3012, aspartate 3039, aspartate 3048, and lysine 3067.

In the N-terminal section; belongs to the CdiA toxin family. As to quaternary structure, interacts with cognate immunity protein CdiI, which blocks its tRNA nuclease activity. The truncated CT fragment (residues 2948-3122) specifically interacts with cognate CdiI which inhibits the tRNA nuclease activity. The truncated CT is more stable in vitro than the original CT fragment characterized in E.coli.

It localises to the membrane. It is found in the secreted. The protein resides in the target cell. The protein localises to the target cell cytoplasm. Its function is as follows. Toxic component of a toxin-immunity protein module, which functions as a cellular contact-dependent growth inhibition (CDI) system. CDI modules allow bacteria to communicate with and inhibit the growth of closely related neighboring bacteria in a contact-dependent fashion. The C-terminal 301 residues (the CT fragment) cleaves near the C-terminus of E.coli tRNA1B(Ala), probably preventing tRNA charging, and inhibits growth in E.coli. A truncated CT fragment (residues 2948-3122) has tRNA endonuclease activity on several B.thailandensis tRNAs as well as tRNA2(Arg) where it cleaves after A-70 and U-71. Inactive CT domain binds tRNA, probably in a 1:1 complex. Toxic activity is neutralized by coexpression of the cognate immunity protein CdiI in E.coli, but not by non-cognate immunity proteins from other strains of B.pseudomallei. May use lipopolysaccharide as its target cell receptor. Probably gains access to the cytoplasm of target cells (B.thailandensis strain E264) by using integral inner membrane protein BTH_II0599. Protein BTH_I0359 is also implicated in an unknown fashion in CDI in B.thailandensis strain E264. Functionally, expression of this cdiAIB locus in B.thailandensis confers protection against other bacteria carrying the locus; growth inhibition requires cellular contact. The CdiA protein is thought to be exported from the cell through the central lumen of CdiB, the other half of its two-partner system (TPS). The TPS domain probably remains associated with CdiB while the FHA-1 domain forms an extended filament with the receptor-binding domain (RBD) at its extremity; in the secretion arrested state the C-terminus of the RBD domain form a hairpin-like structure as the FHA-2, PT and CT domains are periplasmic. Upon binding to a target cell outer membrane receptor (possibly a lipoprotein in this CDI) a signal is transmitted to activate secretion. The filament elongates slightly, the rest of CdiA is secreted and the FHA-2 domain becomes stably associated with the target cell's outer membrane where it facilitates entry of the toxic CT domain into the target cell periplasm. From there the toxic CT domain is cleaved and gains access to the target cell cytoplasm via an inner membrane protein (probably inner membrane protein BTH_II0599). The protein is tRNA nuclease CdiA-2 (cdiA2) of Burkholderia pseudomallei (strain 1026b).